A 389-amino-acid polypeptide reads, in one-letter code: S-adenosylmethionine synthase (389 aa).

His-19 is an ATP binding site. Mg(2+) is bound at residue Asp-21. Residue Glu-47 participates in K(+) binding. Glu-60 and Gln-103 together coordinate L-methionine. The interval Gln-103–Arg-113 is flexible loop. Residues Asp-168–Lys-170, Arg-234–Phe-235, Asp-243, Arg-249–Lys-250, Ala-266, and Lys-270 each bind ATP. L-methionine is bound at residue Asp-243. Lys-274 provides a ligand contact to L-methionine.

The protein belongs to the AdoMet synthase family. As to quaternary structure, homotetramer; dimer of dimers. Mg(2+) is required as a cofactor. It depends on K(+) as a cofactor.

Its subcellular location is the cytoplasm. The catalysed reaction is L-methionine + ATP + H2O = S-adenosyl-L-methionine + phosphate + diphosphate. It functions in the pathway amino-acid biosynthesis; S-adenosyl-L-methionine biosynthesis; S-adenosyl-L-methionine from L-methionine: step 1/1. Its function is as follows. Catalyzes the formation of S-adenosylmethionine (AdoMet) from methionine and ATP. The overall synthetic reaction is composed of two sequential steps, AdoMet formation and the subsequent tripolyphosphate hydrolysis which occurs prior to release of AdoMet from the enzyme. This Solidesulfovibrio magneticus (strain ATCC 700980 / DSM 13731 / RS-1) (Desulfovibrio magneticus) protein is S-adenosylmethionine synthase.